The following is a 221-amino-acid chain: Immediate early response gene 2 protein (221 aa).

N-acetylmethionine is present on Met-1. Residues 105–155 are disordered; the sequence is ETPALCDPPPARVSRKRRSSSDLSDGSDAGLVPSKKARLEEVEGEATSEVP. A compositionally biased stretch (low complexity) spans 125–136; that stretch reads SDLSDGSDAGLV.

It belongs to the IER family.

The protein resides in the cytoplasm. It is found in the nucleus. DNA-binding protein that seems to act as a transcription factor. Involved in the regulation of neuronal differentiation, acts upon JNK-signaling pathway activation and plays a role in neurite outgrowth in hippocampal cells. May mediate with FIBP FGF-signaling in the establishment of laterality in the embryo. Promotes cell motility, seems to stimulate tumor metastasis. This is Immediate early response gene 2 protein (Ier2) from Mus musculus (Mouse).